Reading from the N-terminus, the 391-residue chain is Alkanesulfonate monooxygenase (391 aa).

Belongs to the SsuD family.

It catalyses the reaction an alkanesulfonate + FMNH2 + O2 = an aldehyde + FMN + sulfite + H2O + 2 H(+). Its function is as follows. Catalyzes the desulfonation of aliphatic sulfonates. The sequence is that of Alkanesulfonate monooxygenase from Paracidovorax citrulli (strain AAC00-1) (Acidovorax citrulli).